A 344-amino-acid polypeptide reads, in one-letter code: tRNA N6-adenosine threonylcarbamoyltransferase (344 aa).

Positions 112 and 116 each coordinate Fe cation. Substrate-binding positions include 134–138, Asp167, Gly180, and Asn280; that span reads LASGG. Residue Asp308 coordinates Fe cation.

This sequence belongs to the KAE1 / TsaD family. It depends on Fe(2+) as a cofactor.

The protein localises to the cytoplasm. The catalysed reaction is L-threonylcarbamoyladenylate + adenosine(37) in tRNA = N(6)-L-threonylcarbamoyladenosine(37) in tRNA + AMP + H(+). Functionally, required for the formation of a threonylcarbamoyl group on adenosine at position 37 (t(6)A37) in tRNAs that read codons beginning with adenine. Is involved in the transfer of the threonylcarbamoyl moiety of threonylcarbamoyl-AMP (TC-AMP) to the N6 group of A37, together with TsaE and TsaB. TsaD likely plays a direct catalytic role in this reaction. This Rickettsia rickettsii (strain Iowa) protein is tRNA N6-adenosine threonylcarbamoyltransferase.